The following is a 21-amino-acid chain: GMASKAGAIAGKIAKVALKAL.

Leu21 carries the post-translational modification Leucine amide.

As to expression, expressed by the skin glands.

It localises to the secreted. Antimicrobial peptide. This is Peptide PGLa-R2 from Xenopus ruwenzoriensis (Uganda clawed frog).